The following is a 355-amino-acid chain: 3-dehydroquinate synthase (355 aa).

NAD(+) is bound by residues 71-76 (EGEERK), 105-109 (GVVGD), 129-130 (TS), lysine 142, and lysine 151. Zn(2+) is bound by residues glutamate 184, histidine 246, and histidine 263.

Belongs to the sugar phosphate cyclases superfamily. Dehydroquinate synthase family. The cofactor is NAD(+). It depends on Co(2+) as a cofactor. Zn(2+) is required as a cofactor.

The protein localises to the cytoplasm. It catalyses the reaction 7-phospho-2-dehydro-3-deoxy-D-arabino-heptonate = 3-dehydroquinate + phosphate. It participates in metabolic intermediate biosynthesis; chorismate biosynthesis; chorismate from D-erythrose 4-phosphate and phosphoenolpyruvate: step 2/7. Functionally, catalyzes the conversion of 3-deoxy-D-arabino-heptulosonate 7-phosphate (DAHP) to dehydroquinate (DHQ). This Streptococcus pneumoniae serotype 4 (strain ATCC BAA-334 / TIGR4) protein is 3-dehydroquinate synthase.